A 319-amino-acid chain; its full sequence is Aspartate carbamoyltransferase catalytic subunit (319 aa).

The carbamoyl phosphate site is built by arginine 57 and threonine 58. Lysine 85 provides a ligand contact to L-aspartate. Positions 107, 135, and 138 each coordinate carbamoyl phosphate. Arginine 168 and arginine 222 together coordinate L-aspartate. 2 residues coordinate carbamoyl phosphate: glycine 263 and proline 264.

It belongs to the aspartate/ornithine carbamoyltransferase superfamily. ATCase family. As to quaternary structure, heterododecamer (2C3:3R2) of six catalytic PyrB chains organized as two trimers (C3), and six regulatory PyrI chains organized as three dimers (R2).

It carries out the reaction carbamoyl phosphate + L-aspartate = N-carbamoyl-L-aspartate + phosphate + H(+). It functions in the pathway pyrimidine metabolism; UMP biosynthesis via de novo pathway; (S)-dihydroorotate from bicarbonate: step 2/3. Catalyzes the condensation of carbamoyl phosphate and aspartate to form carbamoyl aspartate and inorganic phosphate, the committed step in the de novo pyrimidine nucleotide biosynthesis pathway. In Paracoccus denitrificans (strain Pd 1222), this protein is Aspartate carbamoyltransferase catalytic subunit.